Consider the following 292-residue polypeptide: UDP-3-O-acyl-N-acetylglucosamine deacetylase (292 aa).

Residues H75, H231, and D235 each contribute to the Zn(2+) site. Residue H258 is the Proton donor of the active site.

It belongs to the LpxC family. Zn(2+) is required as a cofactor.

The enzyme catalyses a UDP-3-O-[(3R)-3-hydroxyacyl]-N-acetyl-alpha-D-glucosamine + H2O = a UDP-3-O-[(3R)-3-hydroxyacyl]-alpha-D-glucosamine + acetate. The protein operates within glycolipid biosynthesis; lipid IV(A) biosynthesis; lipid IV(A) from (3R)-3-hydroxytetradecanoyl-[acyl-carrier-protein] and UDP-N-acetyl-alpha-D-glucosamine: step 2/6. Catalyzes the hydrolysis of UDP-3-O-myristoyl-N-acetylglucosamine to form UDP-3-O-myristoylglucosamine and acetate, the committed step in lipid A biosynthesis. In Nautilia profundicola (strain ATCC BAA-1463 / DSM 18972 / AmH), this protein is UDP-3-O-acyl-N-acetylglucosamine deacetylase.